We begin with the raw amino-acid sequence, 409 residues long: Nucleoprotein (409 aa).

Disordered regions lie at residues 1–32 (MASG…SSGN), 46–84 (SPQP…KGRR), 121–194 (ADVK…GSED), and 238–259 (VDQV…DKMN). An RNA-binding region spans residues 29 to 160 (SSGNASWFQA…GNFRWDFIPL (132 aa)). The region spanning 31-156 (GNASWFQAIK…GGPDGNFRWD (126 aa)) is the CoV N NTD domain. Over residues 70–84 (YWRRQARFKPGKGRR) the composition is skewed to basic residues. Residues 162–179 (RGRSGRSTAASSAASSRP) show a composition bias toward low complexity. Composition is skewed to basic and acidic residues over residues 180–192 (PSRE…RSGS) and 247–259 (KGKE…DKMN). A phosphoserine; by host mark is found at Ser190 and Ser192. The region spanning 215–331 (TKAKADEMAH…QCVDGVGTRP (117 aa)) is the CoV N CTD domain. A dimerization region spans residues 226 to 333 (RYCKRTIPPG…VDGVGTRPKD (108 aa)). An intrachain disulfide couples Cys320 to Cys323. The disordered stretch occupies residues 326-409 (GVGTRPKDDE…GDSALGENEL (84 aa)). A compositionally biased stretch (low complexity) spans 341–356 (RSSSRPATRTSSPAPR). A compositionally biased stretch (basic residues) spans 358–367 (QRLKKEKRPK). Over residues 368-384 (KQDDEVDKALTSDEERN) the composition is skewed to basic and acidic residues. Thr378 bears the Phosphothreonine; by host mark. Residue Ser379 is modified to Phosphoserine; by host.

The protein belongs to the gammacoronavirus nucleocapsid protein family. Homooligomer. Both monomeric and oligomeric forms interact with RNA. Interacts with protein M. Interacts with NSP3; this interaction serves to tether the genome to the newly translated replicase-transcriptase complex at a very early stage of infection. ADP-ribosylated. The ADP-ribosylation is retained in the virion during infection. Post-translationally, phosphorylated on serine and threonine residues.

Its subcellular location is the virion. It localises to the host endoplasmic reticulum-Golgi intermediate compartment. It is found in the host Golgi apparatus. Packages the positive strand viral genome RNA into a helical ribonucleocapsid (RNP) and plays a fundamental role during virion assembly through its interactions with the viral genome and membrane protein M. Plays an important role in enhancing the efficiency of subgenomic viral RNA transcription as well as viral replication. The protein is Nucleoprotein of Avian infectious bronchitis virus (strain Gray) (IBV).